The following is a 156-amino-acid chain: MNIIEGDFQNPGSARFAIVAARFNDFVVGHLVEGAADALRRHGVPDDHIDLIRVPGSFELPLAVQQTAEAGRYSAVIALGAVIRGGTPHFEYVASECTKGVAATMMDTGLPIAFGVLTVDTIEQAIERSGTKAGNKGAEAALSALEMVSLMKKLAE.

Residues phenylalanine 23, 57–59, and 81–83 contribute to the 5-amino-6-(D-ribitylamino)uracil site; these read SFE and AVI. Position 86 to 87 (86 to 87) interacts with (2S)-2-hydroxy-3-oxobutyl phosphate; sequence GT. The active-site Proton donor is histidine 89. Phenylalanine 114 lines the 5-amino-6-(D-ribitylamino)uracil pocket. Arginine 128 provides a ligand contact to (2S)-2-hydroxy-3-oxobutyl phosphate.

This sequence belongs to the DMRL synthase family. Forms an icosahedral capsid composed of 60 subunits, arranged as a dodecamer of pentamers.

The enzyme catalyses (2S)-2-hydroxy-3-oxobutyl phosphate + 5-amino-6-(D-ribitylamino)uracil = 6,7-dimethyl-8-(1-D-ribityl)lumazine + phosphate + 2 H2O + H(+). It functions in the pathway cofactor biosynthesis; riboflavin biosynthesis; riboflavin from 2-hydroxy-3-oxobutyl phosphate and 5-amino-6-(D-ribitylamino)uracil: step 1/2. Its function is as follows. Catalyzes the formation of 6,7-dimethyl-8-ribityllumazine by condensation of 5-amino-6-(D-ribitylamino)uracil with 3,4-dihydroxy-2-butanone 4-phosphate. This is the penultimate step in the biosynthesis of riboflavin. This chain is 6,7-dimethyl-8-ribityllumazine synthase, found in Alkalilimnicola ehrlichii (strain ATCC BAA-1101 / DSM 17681 / MLHE-1).